Reading from the N-terminus, the 951-residue chain is Metal transporter CNNM1 (951 aa).

The helical transmembrane segment at 23–43 threads the bilayer; the sequence is AVLLLFFSLSPRPPAAAAWLL. The disordered stretch occupies residues 114–138; sequence GAGGAAPSAVPTRPPGPQRCREQSD. The 197-residue stretch at 218-414 folds into the CNNM transmembrane domain; sequence LLPPAWLRAL…DPYSDLVKEE (197 aa). Transmembrane regions (helical) follow at residues 222-242, 282-302, and 319-339; these read AWLR…FSGL, LLCT…GWLY, and AGVH…FLGA. CBS domains follow at residues 433–495 and 502–568; these read LTPL…CTPL and YNRP…ILDE. 2 stretches are compositionally biased toward polar residues: residues 731-740 and 814-824; these read SRCSGLNRSE and KAPTTRGTPQT. 2 disordered regions span residues 731 to 754 and 795 to 830; these read SRCS…GSNT and MDSS…DDPV. 2 positions are modified to phosphothreonine: threonine 821 and threonine 824. A Phosphoserine modification is found at serine 850. The segment at 903–951 is disordered; the sequence is DPEASPCSSDSEENMGKKLLRTLSGRKRKKSADGERASEENSNLTPLIT. Residues 920 to 932 are compositionally biased toward basic residues; sequence KLLRTLSGRKRKK. Positions 942-951 are enriched in polar residues; that stretch reads ENSNLTPLIT.

It belongs to the ACDP family. As to expression, predominantly expressed in brain and testis, and, at lower levels, in kidney. In the brain, expressed in hippocampal neurons (at protein level).

It localises to the cell membrane. Its function is as follows. Probable metal transporter. This is Metal transporter CNNM1 (Cnnm1) from Mus musculus (Mouse).